The following is a 340-amino-acid chain: L-threonine 3-dehydrogenase (340 aa).

Position 38 (C38) interacts with Zn(2+). Catalysis depends on charge relay system residues T40 and H43. 6 residues coordinate Zn(2+): H63, E64, C93, C96, C99, and C107. Residues I175, D195, R200, 262–264 (LGI), and 286–287 (IY) contribute to the NAD(+) site.

It belongs to the zinc-containing alcohol dehydrogenase family. In terms of assembly, homotetramer. Zn(2+) is required as a cofactor.

It is found in the cytoplasm. The catalysed reaction is L-threonine + NAD(+) = (2S)-2-amino-3-oxobutanoate + NADH + H(+). It participates in amino-acid degradation; L-threonine degradation via oxydo-reductase pathway; glycine from L-threonine: step 1/2. Catalyzes the NAD(+)-dependent oxidation of L-threonine to 2-amino-3-ketobutyrate. The sequence is that of L-threonine 3-dehydrogenase from Legionella pneumophila (strain Corby).